A 416-amino-acid chain; its full sequence is MSLVAIGINHKTATVDLREKVAFSPDKIHDAMKSLASRTRSGEAVIVSTCNRTELYCNNGDEADIIAWLEEYHGLDHKDVAPCLYNYHGQDAVRHLMRVASGLDSLILGEPQILGQVKQAFVKAKEAGTVALTIDRLFQNTFSVAKKVRTDTEIGAAAVSVAFAAVSMAKHIFSSISTTKVLLIGAGETIELVAKHLKDNGVASMVVANRTLERAQGMCEEFGATAITLAQIPDYLPKADIVISSTASPLPILGKGMVEKALKQRRHQPMLLVDIAVPRDIEPEVADLDDAFLYTVDDLHSIIEQNMASRKEAAEQAEVITEEQSFLFMDWIRSLESVDSIREYRSQSMAVKDELVERALNKLAQGSDTEQVLIELANRLTNKLIHAPTQALTAASRQGDLNTLGQLRSALGLDKH.

Substrate-binding positions include Thr-49–Arg-52, Ser-105, Glu-110–Gln-112, and Gln-116. The active-site Nucleophile is Cys-50. Residue Gly-185–Ile-190 coordinates NADP(+).

The protein belongs to the glutamyl-tRNA reductase family. In terms of assembly, homodimer.

The catalysed reaction is (S)-4-amino-5-oxopentanoate + tRNA(Glu) + NADP(+) = L-glutamyl-tRNA(Glu) + NADPH + H(+). The protein operates within porphyrin-containing compound metabolism; protoporphyrin-IX biosynthesis; 5-aminolevulinate from L-glutamyl-tRNA(Glu): step 1/2. In terms of biological role, catalyzes the NADPH-dependent reduction of glutamyl-tRNA(Glu) to glutamate 1-semialdehyde (GSA). In Shewanella baltica (strain OS185), this protein is Glutamyl-tRNA reductase.